The chain runs to 727 residues: Translation initiation factor IF-2, mitochondrial (727 aa).

The transit peptide at 1-29 (MNQKLLKLENLLRFHTIYRQLHSLCQRRA) directs the protein to the mitochondrion. The region spanning 178 to 348 (PRSPVVTIMG…VALAEMLELK (171 aa)) is the tr-type G domain. A G1 region spans residues 187–194 (GHVDHGKT). Residue 187-194 (GHVDHGKT) participates in GTP binding. The tract at residues 212 to 216 (GITQH) is G2. Residues 234-237 (DTPG) and 288-291 (NKCD) contribute to the GTP site. The G3 stretch occupies residues 234–237 (DTPG). The tract at residues 288 to 291 (NKCD) is G4. The segment at 324–326 (SAL) is G5. A Phosphothreonine modification is found at Thr-688.

Belongs to the TRAFAC class translation factor GTPase superfamily. Classic translation factor GTPase family. IF-2 subfamily. As to quaternary structure, monomer. Expressed in all tissues examined. Highest level in skeletal muscle.

Its subcellular location is the mitochondrion. In terms of biological role, one of the essential components for the initiation of protein synthesis. Protects formylmethionyl-tRNA from spontaneous hydrolysis and promotes its binding to the 30S ribosomal subunits. Also involved in the hydrolysis of GTP during the formation of the 70S ribosomal complex. In Homo sapiens (Human), this protein is Translation initiation factor IF-2, mitochondrial (MTIF2).